The sequence spans 521 residues: Cytochrome P450 monooxygenase sdnF (521 aa).

Residues 19 to 39 (YLGLLLSGTVLYTVYKLIIAI) traverse the membrane as a helical segment. N-linked (GlcNAc...) asparagine glycosylation is found at Asn178, Asn186, Asn191, Asn309, and Asn416. Cys460 lines the heme pocket.

It belongs to the cytochrome P450 family. Heme serves as cofactor.

The protein localises to the membrane. The protein operates within antibiotic biosynthesis. Its function is as follows. Cytochrome P450 monooxygenase; part of the gene cluster that mediates the biosynthesis of sordarin and hypoxysordarin, glycoside antibiotics with a unique tetracyclic diterpene aglycone structure. First, the geranylgeranyl diphosphate synthase sdnC constructs GGDP from farnesyl diphosphate and isopentenyl diphosphate. The diterpene cyclase sdnA then catalyzes the cyclization of GGDP to afford cycloaraneosene. Cycloaraneosene is then hydroxylated four times by the putative cytochrome P450 monooxygenases sdnB, sdnE, sdnF and sdnH to give a hydroxylated cycloaraneosene derivative such as cycloaraneosene-8,9,13,19-tetraol. Although the order of the hydroxylations is unclear, at least C8, C9 and C13 of the cycloaraneosene skeleton are hydroxylated before the sordaricin formation. Dehydration of the 13-hydroxy group of the hydroxylated cycloaraneosene derivative might be catalyzed by an unassigned hypothetical protein such as sdnG and sdnP to construct the cyclopentadiene moiety. The FAD-dependent oxidoreductase sdnN is proposed to catalyze the oxidation at C9 of the hydroxylated cycloaraneosene derivative and also catalyze the Baeyer-Villiger oxidation to give the lactone intermediate. The presumed lactone intermediate would be hydrolyzed to give an acrolein moiety and a carboxylate moiety. Then, [4+2]cycloaddition would occur between the acrolein moiety and the cyclopentadiene moiety to give sordaricin. SdnN might also be involved in the [4+2]cycloaddition after the hypothesized oxidation to accommodate the oxidized product and prompt the [4+2]cycloaddition. GDP-6-deoxy-D-altrose may be biosynthesized from GDP-D-mannose by the putative GDP-mannose-4,6-dehydratase sdnI and the short-chain dehydrogenase sdnK. The glycosyltransferase sdnJ catalyzes the attachment of 6-deoxy-D-altrose onto the 19-hydroxy group of sordaricin to give 4'-O-demethylsordarin. The methyltransferase sdnD would complete the biosynthesis of sordarin. Sordarin can be further modified into hypoxysordarin. The unique acyl chain at the 3'-hydroxy group of hypoxysordarin would be constructed by an iterative type I PKS sdnO and the trans-acting polyketide methyltransferase sdnL. SdnL would be responsible for the introduction of an alpha-methyl group of the polyketide chain. Alternatively, the beta-lactamase-like protein sdnR might be responsible for the cleavage and transfer of the polyketide chain from the PKS sdnO to sordarin. Two putative cytochrome P450 monooxygenases, sdnQ and sdnT, might catalyze the epoxidations of the polyketide chain to complete the biosynthesis of hypoxysordarin. Transcriptional regulators sdnM and sdnS are presumably encoded for the transcriptional regulation of the expression of the sdn gene cluster. The polypeptide is Cytochrome P450 monooxygenase sdnF (Sordaria araneosa (Pleurage araneosa)).